The sequence spans 53 residues: Unknown protein from 2D-PAGE of needles (53 aa).

The chain is Unknown protein from 2D-PAGE of needles from Pinus pinaster (Maritime pine).